The following is a 281-amino-acid chain: Tumor necrosis factor ligand superfamily member 10 (281 aa).

Over 1 to 17 (MAMMEVQGGPSLGQTCV) the chain is Cytoplasmic. Residues 18–38 (LIVIFTVLLQSLCVAVTYVYF) traverse the membrane as a helical; Signal-anchor for type II membrane protein segment. Residues 39–281 (TNELKQMQDK…ASFFGAFLVG (243 aa)) lie on the Extracellular side of the membrane. The region spanning 122–280 (VAAHITGTRG…EASFFGAFLV (159 aa)) is the THD domain. Positions 124–144 (AHITGTRGRSNTLSSPNSKNE) are disordered. Over residues 130-141 (RGRSNTLSSPNS) the composition is skewed to polar residues. Residue cysteine 230 coordinates Zn(2+).

Belongs to the tumor necrosis factor family. In terms of assembly, homotrimer. One TNFSF10 homotrimer interacts with three TNFSF10A mononers. One TNFSF10 homotrimer interacts with three TNFSF10B mononers. Tyrosine phosphorylated by PKDCC/VLK. Widespread; most predominant in spleen, lung and prostate.

The protein resides in the cell membrane. It localises to the secreted. Its function is as follows. Cytokine that binds to TNFRSF10A/TRAILR1, TNFRSF10B/TRAILR2, TNFRSF10C/TRAILR3, TNFRSF10D/TRAILR4 and possibly also to TNFRSF11B/OPG. Induces apoptosis. Its activity may be modulated by binding to the decoy receptors TNFRSF10C/TRAILR3, TNFRSF10D/TRAILR4 and TNFRSF11B/OPG that cannot induce apoptosis. This is Tumor necrosis factor ligand superfamily member 10 (TNFSF10) from Homo sapiens (Human).